Here is a 201-residue protein sequence, read N- to C-terminus: Bradykinin potentiating and C-type natriuretic peptides (201 aa).

A signal peptide spans 1–23; the sequence is MFVSRLAASGLLLLALLAVSLDG. Residues 24–47 constitute a propeptide that is removed on maturation; that stretch reads KPVQQWSQNWPGPKVPPLVVQQWS. The residue at position 48 (glutamine 48) is a Pyrrolidone carboxylic acid. Positions 58–60 are excised as a propeptide; sequence LVV. Glutamine 61 carries the post-translational modification Pyrrolidone carboxylic acid. 2 propeptides span residues 67–95 and 107–179; these read TQLQ…AALD and GSKA…LAKK. The segment at 90 to 172 is disordered; that stretch reads PDAALDTPPA…GGGGGGGARR (83 aa). The span at 120 to 130 shows a compositional bias: low complexity; it reads SKGASATSTAS. A compositionally biased stretch (basic and acidic residues) spans 132–142; the sequence is PMRDLRTDGKQ. Gly residues predominate over residues 159-170; the sequence is PGGGGGGGGGGA. Cysteines 185 and 201 form a disulfide.

It in the N-terminal section; belongs to the bradykinin-potentiating peptide family. The protein in the central section; belongs to the bradykinin inhibitor peptide family. In the C-terminal section; belongs to the natriuretic peptide family. Venom gland.

The protein localises to the secreted. Functionally, inhibits the activity of the angiotensin-converting enzyme (ACE) by a preferential interaction with its C-domain. May also potentiate the hypotensive effects of bradykinin. Its function is as follows. Antagonizes the vasodilatory actions of bradykinin at the B2 bradykinin receptor. Has a vasorelaxant activity in rat aortic strips and a diuretic potency in anesthetized rats. May act by activating natriuretic receptors (NPR1 and/or NPR2). In Sistrurus catenatus edwardsii (Desert massasauga), this protein is Bradykinin potentiating and C-type natriuretic peptides.